We begin with the raw amino-acid sequence, 602 residues long: Elongation factor 4 (602 aa).

The tr-type G domain maps to 7 to 189 (KFIRNFSIIA…QLVVAIPPPV (183 aa)). Residues 19 to 24 (DHGKST) and 136 to 139 (NKID) contribute to the GTP site.

The protein belongs to the TRAFAC class translation factor GTPase superfamily. Classic translation factor GTPase family. LepA subfamily.

The protein resides in the cell inner membrane. It carries out the reaction GTP + H2O = GDP + phosphate + H(+). Its function is as follows. Required for accurate and efficient protein synthesis under certain stress conditions. May act as a fidelity factor of the translation reaction, by catalyzing a one-codon backward translocation of tRNAs on improperly translocated ribosomes. Back-translocation proceeds from a post-translocation (POST) complex to a pre-translocation (PRE) complex, thus giving elongation factor G a second chance to translocate the tRNAs correctly. Binds to ribosomes in a GTP-dependent manner. The protein is Elongation factor 4 of Coxiella burnetii (strain RSA 493 / Nine Mile phase I).